Reading from the N-terminus, the 341-residue chain is Malate dehydrogenase, mitochondrial (341 aa).

Residues glycine 35–glycine 41 and aspartate 61 each bind NAD(+). Substrate is bound by residues arginine 109 and arginine 115. Asparagine 122 contacts NAD(+). Positions 147 and 181 each coordinate substrate. Histidine 205 serves as the catalytic Proton acceptor. Methionine 254 contributes to the NAD(+) binding site.

Belongs to the LDH/MDH superfamily. MDH type 1 family. In terms of assembly, homodimer.

The protein localises to the mitochondrion matrix. It catalyses the reaction (S)-malate + NAD(+) = oxaloacetate + NADH + H(+). This is Malate dehydrogenase, mitochondrial (MDH1) from Schizosaccharomyces pombe (strain 972 / ATCC 24843) (Fission yeast).